A 331-amino-acid chain; its full sequence is Ketol-acid reductoisomerase (NADP(+)) (331 aa).

One can recognise a KARI N-terminal Rossmann domain in the interval 2–182; the sequence is ARMYYDEDAN…GGTRAGVLET (181 aa). NADP(+)-binding positions include 25-28, S51, S53, and 83-86; these read YGSQ and DEVQ. H108 is a catalytic residue. Residue G134 coordinates NADP(+). One can recognise a KARI C-terminal knotted domain in the interval 183 to 328; sequence TFREETETDL…KDLRAMFSWL (146 aa). Mg(2+) is bound by residues D191, E195, E227, and E231. Position 252 (S252) interacts with substrate.

It belongs to the ketol-acid reductoisomerase family. The cofactor is Mg(2+).

The catalysed reaction is (2R)-2,3-dihydroxy-3-methylbutanoate + NADP(+) = (2S)-2-acetolactate + NADPH + H(+). The enzyme catalyses (2R,3R)-2,3-dihydroxy-3-methylpentanoate + NADP(+) = (S)-2-ethyl-2-hydroxy-3-oxobutanoate + NADPH + H(+). The protein operates within amino-acid biosynthesis; L-isoleucine biosynthesis; L-isoleucine from 2-oxobutanoate: step 2/4. It functions in the pathway amino-acid biosynthesis; L-valine biosynthesis; L-valine from pyruvate: step 2/4. Functionally, involved in the biosynthesis of branched-chain amino acids (BCAA). Catalyzes an alkyl-migration followed by a ketol-acid reduction of (S)-2-acetolactate (S2AL) to yield (R)-2,3-dihydroxy-isovalerate. In the isomerase reaction, S2AL is rearranged via a Mg-dependent methyl migration to produce 3-hydroxy-3-methyl-2-ketobutyrate (HMKB). In the reductase reaction, this 2-ketoacid undergoes a metal-dependent reduction by NADPH to yield (R)-2,3-dihydroxy-isovalerate. This Nostoc punctiforme (strain ATCC 29133 / PCC 73102) protein is Ketol-acid reductoisomerase (NADP(+)).